The sequence spans 310 residues: MISLSSVAIALTTVVGALALPSDQSVNLAARQAITSSQTGTNNGYYYSFWTNGAGSVSYSNGAAGQFSVNWANQGGGDFTCGKGWNPGKAQDISFSGTFTPNGNAYLSIYGWTTGPLVEYYILENFGSYNPGNGMTHVGTLTSDGSDYDIYKHTQVNQPSIVGTSTFDQYWSIRKNKRSSGTVTTANHFSAWASHGMNLGSHNYQILSVEGYQSSGSASMTVSAGSSSSGGSGSGSGSGSGSGSGSGSQTTTAGSSTGTGTGSGSGSGSGGSGGNCAAQWGQCGGQGWNGPTCCSSGTCKASNQWYSQCL.

The signal sequence occupies residues 1–19; it reads MISLSSVAIALTTVVGALA. The region spanning 33–223 is the GH11 domain; that stretch reads AITSSQTGTN…SSGSASMTVS (191 aa). Glu-119 (nucleophile) is an active-site residue. The active-site Proton donor is the Glu-210. Over residues 218 to 227 the composition is skewed to low complexity; it reads ASMTVSAGSS. Residues 218-274 are disordered; sequence ASMTVSAGSSSSGGSGSGSGSGSGSGSGSGSQTTTAGSSTGTGTGSGSGSGSGGSGG. Residues 228–246 show a composition bias toward gly residues; sequence SSGGSGSGSGSGSGSGSGS. The segment covering 247 to 256 has biased composition (low complexity); sequence GSQTTTAGSS. Residues 257–274 are compositionally biased toward gly residues; it reads TGTGTGSGSGSGSGGSGG. A CBM1 domain is found at 275–310; sequence NCAAQWGQCGGQGWNGPTCCSSGTCKASNQWYSQCL.

Belongs to the glycosyl hydrolase 11 (cellulase G) family.

It localises to the secreted. It carries out the reaction Endohydrolysis of (1-&gt;4)-beta-D-xylosidic linkages in xylans.. The protein operates within glycan degradation; xylan degradation. Endo-1,4-beta-xylanase involved in the hydrolysis of xylan, a major structural heterogeneous polysaccharide found in plant biomass representing the second most abundant polysaccharide in the biosphere, after cellulose. Hydrolyzes birchwood xylan, beechwood xylan, and oat spelt xylan to produce short-chain xylooligosaccharides, xylopentaose, xylotriose, and xylobiose as the main products. The chain is Endo-1,4-beta-xylanase B (xynB) from Penicillium oxalicum.